The primary structure comprises 355 residues: 3-isopropylmalate dehydrogenase (355 aa).

The substrate site is built by Arg-98, Arg-108, Arg-132, and Asp-223. Mg(2+) contacts are provided by Asp-223, Asp-247, and Asp-251. Position 283 to 295 (283 to 295 (GSAPDIAGQQKAD)) interacts with NAD(+).

The protein belongs to the isocitrate and isopropylmalate dehydrogenases family. LeuB type 2 subfamily. In terms of assembly, homodimer. It depends on Mg(2+) as a cofactor. Mn(2+) serves as cofactor.

The protein localises to the cytoplasm. The enzyme catalyses (2R,3S)-3-isopropylmalate + NAD(+) = 4-methyl-2-oxopentanoate + CO2 + NADH. Its pathway is amino-acid biosynthesis; L-leucine biosynthesis; L-leucine from 3-methyl-2-oxobutanoate: step 3/4. In terms of biological role, catalyzes the oxidation of 3-carboxy-2-hydroxy-4-methylpentanoate (3-isopropylmalate) to 3-carboxy-4-methyl-2-oxopentanoate. The product decarboxylates to 4-methyl-2 oxopentanoate. This is 3-isopropylmalate dehydrogenase from Clavibacter michiganensis subsp. michiganensis (strain NCPPB 382).